The chain runs to 132 residues: D-ribose pyranase (132 aa).

The Proton donor role is filled by His-20. Substrate contacts are provided by residues Asp-28, His-99, and 121-123 (YSN).

The protein belongs to the RbsD / FucU family. RbsD subfamily. Homodecamer.

The protein localises to the cytoplasm. It carries out the reaction beta-D-ribopyranose = beta-D-ribofuranose. The protein operates within carbohydrate metabolism; D-ribose degradation; D-ribose 5-phosphate from beta-D-ribopyranose: step 1/2. In terms of biological role, catalyzes the interconversion of beta-pyran and beta-furan forms of D-ribose. The protein is D-ribose pyranase of Pseudomonas putida (strain ATCC 47054 / DSM 6125 / CFBP 8728 / NCIMB 11950 / KT2440).